We begin with the raw amino-acid sequence, 293 residues long: MVNLTIKREKKKIPRAFVVGTPIHHSKSPKIHNFWLKQYDLQGEYLAQEVTSEEFRDFLTSLKRRGFCGGNVTLPHKQEAFHLANYKDDVATMIGAVNTLWYEGDKLCGTNSDAYGFSANLDDSAPDWMGETALVFGAGGAARAILYALKKRGFERICLVNRTKQRAESLAEHFGKPVEVCDWYKAHEILYQADLIVNTTSVGMINSNEKESTSFFCDFHKTKTTALVTDIVYTPLVTPFLQRAKAHGLRTVDGLGMLLHQAVLGFERWFGIRPRVTKALRATILQDMGEKRG.

Shikimate-binding positions include 26 to 28 (SKS) and Thr73. The Proton acceptor role is filled by Lys77. An NADP(+)-binding site is contributed by Asp89. Residues Asn98 and Asp113 each coordinate shikimate. NADP(+) is bound by residues 137-141 (GAGGA), 161-166 (NRTKQR), and Ile231. Residue Tyr233 coordinates shikimate. Gly254 provides a ligand contact to NADP(+).

Belongs to the shikimate dehydrogenase family. Homodimer.

It catalyses the reaction shikimate + NADP(+) = 3-dehydroshikimate + NADPH + H(+). Its pathway is metabolic intermediate biosynthesis; chorismate biosynthesis; chorismate from D-erythrose 4-phosphate and phosphoenolpyruvate: step 4/7. Its function is as follows. Involved in the biosynthesis of the chorismate, which leads to the biosynthesis of aromatic amino acids. Catalyzes the reversible NADPH linked reduction of 3-dehydroshikimate (DHSA) to yield shikimate (SA). This chain is Shikimate dehydrogenase (NADP(+)), found in Bartonella henselae (strain ATCC 49882 / DSM 28221 / CCUG 30454 / Houston 1) (Rochalimaea henselae).